A 223-amino-acid polypeptide reads, in one-letter code: Adenylate kinase 4, mitochondrial (223 aa).

15–20 (GSGKGT) contributes to the a ribonucleoside 5'-triphosphate binding site. Residues 35 to 64 (SSGHFLRENIKANTEVGDMAKQYIEKGLLV) form an NMP region. S36 and R41 together coordinate AMP. K60 is modified (N6-succinyllysine). AMP is bound by residues 62-64 (LLV), 89-92 (GFPR), and Q96. Residues 125–162 (RRWIHPPSGRVYNLDFNPPHVHGMDDVTGEPLVQQEDD) are LID. Residues R126 and 135-136 (VY) each bind a ribonucleoside 5'-triphosphate. R170 is an AMP binding site. Position 175 is an N6-acetyllysine (K175). N6-acetyllysine; alternate is present on residues K179 and K186. N6-succinyllysine; alternate occurs at positions 179 and 186. Residue T199 participates in a ribonucleoside 5'-triphosphate binding.

This sequence belongs to the adenylate kinase family. AK3 subfamily. As to quaternary structure, monomer. Interacts with SLC25A5/ANT2.

Its subcellular location is the mitochondrion matrix. It catalyses the reaction a ribonucleoside 5'-phosphate + ATP = a ribonucleoside 5'-diphosphate + ADP. The catalysed reaction is AMP + ATP = 2 ADP. The enzyme catalyses GTP + AMP = GDP + ADP. It carries out the reaction CMP + ATP = CDP + ADP. It catalyses the reaction GTP + CMP = CDP + GDP. The catalysed reaction is dAMP + ATP = dADP + ADP. The enzyme catalyses dCMP + ATP = dCDP + ADP. It carries out the reaction a 2'-deoxyribonucleoside 5'-diphosphate + ATP = a 2'-deoxyribonucleoside 5'-triphosphate + ADP. It catalyses the reaction a ribonucleoside 5'-diphosphate + ATP = a ribonucleoside 5'-triphosphate + ADP. The catalysed reaction is GDP + ATP = GTP + ADP. The enzyme catalyses CDP + GTP = CTP + GDP. It carries out the reaction CDP + ATP = CTP + ADP. It catalyses the reaction UDP + ATP = UTP + ADP. The catalysed reaction is GTP + UDP = UTP + GDP. The enzyme catalyses dADP + GTP = dATP + GDP. It carries out the reaction dCDP + GTP = dCTP + GDP. It catalyses the reaction dCDP + ATP = dCTP + ADP. The catalysed reaction is dGDP + ATP = dGTP + ADP. The enzyme catalyses dTDP + GTP = dTTP + GDP. It carries out the reaction dTDP + ATP = dTTP + ADP. Its function is as follows. Broad-specificity mitochondrial nucleoside phosphate kinase involved in cellular nucleotide homeostasis by catalyzing nucleoside-phosphate interconversions. Similar to other adenylate kinases, preferentially catalyzes the phosphorylation of the nucleoside monophosphate AMP with ATP as phosphate donor to produce ADP. Phosphorylates only AMP when using GTP as phosphate donor. In vitro, can also catalyze the phosphorylation of CMP, dAMP and dCMP and use GTP as an alternate phosphate donor. Moreover, exhibits a diphosphate kinase activity, producing ATP, CTP, GTP, UTP, TTP, dATP, dCTP and dGTP from the corresponding diphosphate substrates with either ATP or GTP as phosphate donors. Plays a role in controlling cellular ATP levels by regulating phosphorylation and activation of the energy sensor protein kinase AMPK. Plays a protective role in the cellular response to oxidative stress. The chain is Adenylate kinase 4, mitochondrial from Bos taurus (Bovine).